A 447-amino-acid polypeptide reads, in one-letter code: Chromosomal replication initiator protein DnaA (447 aa).

The domain I, interacts with DnaA modulators stretch occupies residues Met-1 to Lys-66. The interval Lys-66–Ser-102 is domain II. A domain III, AAA+ region region spans residues Asn-103–Ser-319. The ATP site is built by Gly-146, Gly-148, Lys-149, and Thr-150. Positions Ser-320–Gly-447 are domain IV, binds dsDNA.

It belongs to the DnaA family. As to quaternary structure, oligomerizes as a right-handed, spiral filament on DNA at oriC.

It localises to the cytoplasm. Its function is as follows. Plays an essential role in the initiation and regulation of chromosomal replication. ATP-DnaA binds to the origin of replication (oriC) to initiate formation of the DNA replication initiation complex once per cell cycle. Binds the DnaA box (a 9 base pair repeat at the origin) and separates the double-stranded (ds)DNA. Forms a right-handed helical filament on oriC DNA; dsDNA binds to the exterior of the filament while single-stranded (ss)DNA is stabiized in the filament's interior. The ATP-DnaA-oriC complex binds and stabilizes one strand of the AT-rich DNA unwinding element (DUE), permitting loading of DNA polymerase. After initiation quickly degrades to an ADP-DnaA complex that is not apt for DNA replication. Binds acidic phospholipids. In Kosmotoga olearia (strain ATCC BAA-1733 / DSM 21960 / TBF 19.5.1), this protein is Chromosomal replication initiator protein DnaA.